The primary structure comprises 298 residues: Protoheme IX farnesyltransferase (298 aa).

Transmembrane regions (helical) follow at residues 26 to 46 (VVSL…PGAV), 52 to 72 (IFGT…NCLV), 93 to 113 (VSVP…LFML), 120 to 140 (LTMW…TVIL), 148 to 168 (IVIG…AVTG), 174 to 194 (ALLL…ALAL), 219 to 239 (LHVL…YLTQ), 241 to 261 (SGLI…YYAI), and 278 to 298 (YSIA…YFYF).

It belongs to the UbiA prenyltransferase family. Protoheme IX farnesyltransferase subfamily.

The protein localises to the cell inner membrane. It carries out the reaction heme b + (2E,6E)-farnesyl diphosphate + H2O = Fe(II)-heme o + diphosphate. The protein operates within porphyrin-containing compound metabolism; heme O biosynthesis; heme O from protoheme: step 1/1. Converts heme B (protoheme IX) to heme O by substitution of the vinyl group on carbon 2 of heme B porphyrin ring with a hydroxyethyl farnesyl side group. The sequence is that of Protoheme IX farnesyltransferase from Nitrosomonas europaea (strain ATCC 19718 / CIP 103999 / KCTC 2705 / NBRC 14298).